The following is a 286-amino-acid chain: 4-hydroxy-3-methylbut-2-enyl diphosphate reductase (286 aa).

Cys12 is a [4Fe-4S] cluster binding site. The (2E)-4-hydroxy-3-methylbut-2-enyl diphosphate site is built by His46 and His79. Dimethylallyl diphosphate contacts are provided by His46 and His79. The isopentenyl diphosphate site is built by His46 and His79. Cys101 is a binding site for [4Fe-4S] cluster. (2E)-4-hydroxy-3-methylbut-2-enyl diphosphate is bound at residue His129. His129 is a dimethylallyl diphosphate binding site. His129 contributes to the isopentenyl diphosphate binding site. Glu131 (proton donor) is an active-site residue. Thr169 is a binding site for (2E)-4-hydroxy-3-methylbut-2-enyl diphosphate. Cys198 lines the [4Fe-4S] cluster pocket. (2E)-4-hydroxy-3-methylbut-2-enyl diphosphate is bound by residues Ser226, Asn228, and Ser270. Residues Ser226, Asn228, and Ser270 each contribute to the dimethylallyl diphosphate site. Isopentenyl diphosphate-binding residues include Ser226, Asn228, and Ser270.

Belongs to the IspH family. [4Fe-4S] cluster serves as cofactor.

It carries out the reaction isopentenyl diphosphate + 2 oxidized [2Fe-2S]-[ferredoxin] + H2O = (2E)-4-hydroxy-3-methylbut-2-enyl diphosphate + 2 reduced [2Fe-2S]-[ferredoxin] + 2 H(+). The enzyme catalyses dimethylallyl diphosphate + 2 oxidized [2Fe-2S]-[ferredoxin] + H2O = (2E)-4-hydroxy-3-methylbut-2-enyl diphosphate + 2 reduced [2Fe-2S]-[ferredoxin] + 2 H(+). It functions in the pathway isoprenoid biosynthesis; dimethylallyl diphosphate biosynthesis; dimethylallyl diphosphate from (2E)-4-hydroxy-3-methylbutenyl diphosphate: step 1/1. Its pathway is isoprenoid biosynthesis; isopentenyl diphosphate biosynthesis via DXP pathway; isopentenyl diphosphate from 1-deoxy-D-xylulose 5-phosphate: step 6/6. Its function is as follows. Catalyzes the conversion of 1-hydroxy-2-methyl-2-(E)-butenyl 4-diphosphate (HMBPP) into a mixture of isopentenyl diphosphate (IPP) and dimethylallyl diphosphate (DMAPP). Acts in the terminal step of the DOXP/MEP pathway for isoprenoid precursor biosynthesis. This chain is 4-hydroxy-3-methylbut-2-enyl diphosphate reductase, found in Solidesulfovibrio magneticus (strain ATCC 700980 / DSM 13731 / RS-1) (Desulfovibrio magneticus).